Reading from the N-terminus, the 145-residue chain is INGDAKGTVFFEQESEKCPVKVTGEVTGLAKGLHGFHVHEFGDNTNGCMSSGPHFNPQGKEHGAPTDENRHLGDLGNITATGDGPTAVDICDCKITLFGANSIIGRTVVVHADPDDLGKGGHELSKTTGNAGARIGCGVIGIAKI.

Residues His-37, His-39, and His-54 each contribute to the Cu cation site. The cysteines at positions 48 and 137 are disulfide-linked. Zn(2+) is bound by residues His-54, His-62, His-71, and Asp-74. A Cu cation-binding site is contributed by His-111.

Belongs to the Cu-Zn superoxide dismutase family. In terms of assembly, homodimer. The cofactor is Cu cation. It depends on Zn(2+) as a cofactor.

Its subcellular location is the cytoplasm. The catalysed reaction is 2 superoxide + 2 H(+) = H2O2 + O2. In terms of biological role, destroys radicals which are normally produced within the cells and which are toxic to biological systems. This chain is Superoxide dismutase [Cu-Zn], found in Drosophila busckii (Fruit fly).